Reading from the N-terminus, the 569-residue chain is Urease subunit alpha (569 aa).

Residues 131 to 569 enclose the Urease domain; that stretch reads GAIDSHIHFI…LPLAQRYLLL (439 aa). Positions 136, 138, and 219 each coordinate Ni(2+). Lys-219 is subject to N6-carboxylysine. Residue His-221 coordinates substrate. Residues His-248 and His-274 each coordinate Ni(2+). His-322 (proton donor) is an active-site residue. Asp-362 contributes to the Ni(2+) binding site.

It belongs to the metallo-dependent hydrolases superfamily. Urease alpha subunit family. In terms of assembly, heterotrimer of UreA (gamma), UreB (beta) and UreC (alpha) subunits. Three heterotrimers associate to form the active enzyme. It depends on Ni cation as a cofactor. In terms of processing, carboxylation allows a single lysine to coordinate two nickel ions.

The protein resides in the cytoplasm. It catalyses the reaction urea + 2 H2O + H(+) = hydrogencarbonate + 2 NH4(+). It participates in nitrogen metabolism; urea degradation; CO(2) and NH(3) from urea (urease route): step 1/1. This Prochlorococcus marinus (strain NATL2A) protein is Urease subunit alpha.